The primary structure comprises 729 residues: Subtilisin-like protease SBT4.3 (729 aa).

The N-terminal stretch at 1–23 is a signal peptide; sequence MAKLSTPLYLICLAFIFTRDVSA. Residues 24–109 constitute a propeptide, activation peptide; the sequence is NDYRQASSVY…VFPSKSHELT (86 aa). Positions 32–108 constitute an Inhibitor I9 domain; that stretch reads VYIVYMGTLP…SVFPSKSHEL (77 aa). Asn-82 carries an N-linked (GlcNAc...) asparagine glycan. One can recognise a Peptidase S8 domain in the interval 113 to 580; that stretch reads SWDFVGFGEK…SGQINPTKAS (468 aa). Residues Asp-139 and His-196 each act as charge relay system in the active site. Residues Asn-275, Asn-348, Asn-359, and Asn-363 are each glycosylated (N-linked (GlcNAc...) asparagine). In terms of domain architecture, PA spans 350–436; it reads TKFPIVYGQN…LGFEDYKSIK (87 aa). The Charge relay system role is filled by Ser-521. Residues Asn-614, Asn-642, and Asn-656 are each glycosylated (N-linked (GlcNAc...) asparagine).

This sequence belongs to the peptidase S8 family. Post-translationally, the C-terminal propeptide is autocleaved.

It is found in the secreted. This Arabidopsis thaliana (Mouse-ear cress) protein is Subtilisin-like protease SBT4.3.